Here is a 98-residue protein sequence, read N- to C-terminus: Feather keratin 1 (98 aa).

The protein belongs to the avian keratin family. As to quaternary structure, the avian keratins (F-ker, S-ker, C-ker and B-ker) are a complex mixture of very similar polypeptides.

In Gallus gallus (Chicken), this protein is Feather keratin 1.